The sequence spans 231 residues: ADP-ribosylation factor-like protein 6-interacting protein 4 (231 aa).

Over residues 1 to 19 (MAHVSSRKRSRSRSRSRGR) the composition is skewed to basic residues. Positions 1-154 (MAHVSSRKRS…EDNDGPVLTD (154 aa)) are disordered. Residues 20–34 (RGSEKRSKRSSKDSS) are compositionally biased toward basic and acidic residues. The span at 64–89 (TSRSSSSSSSSSSSSSSSSTSSSSSS) shows a compositional bias: low complexity. The segment covering 92 to 119 (RKKRGKHKDKKKRKKKKKRKKKMKRKGK) has biased composition (basic residues). Residues Ser142 and Ser176 each carry the phosphoserine modification. Lys193 participates in a covalent cross-link: Glycyl lysine isopeptide (Lys-Gly) (interchain with G-Cter in SUMO2).

Belongs to the ARL6IP4 family. Interacts with ARL6. Interacts with ZCCHC17. Interacts with SRSF2.

The protein resides in the nucleus. It is found in the nucleolus. Its subcellular location is the nucleus speckle. Functionally, involved in modulating alternative pre-mRNA splicing with either 5' distal site activation or preferential use of 3' proximal site. This chain is ADP-ribosylation factor-like protein 6-interacting protein 4 (Arl6ip4), found in Rattus norvegicus (Rat).